We begin with the raw amino-acid sequence, 553 residues long: MRLLGSLILTLSLIASAFSSSVPLTLCMSGRAQGTESLNKSGSCEYGAYNGPTGPGTLTATLNEYFYSSGVKCGDCFEVSGPKGKTVVRVVNFCSAGTCPSERPLFMLTPDAFQEISSDPLSVVYDAGFRKVSCDASGPIKAQVSEDSSKYYVKLLIFNNEVGIQSVTIKGKDMSAPVTMVRQGSAQFVWSQAGKEMMFPATVVVSSQYGGSVTMTMNSLSMDILKFSGNFVAPKSSIIKNAPASCSLSASPLAIYQNGLTEGWNYWSSRSYSQINTTDSSSHSVGSTKSLSLVLMGSSSALTLARSGDFETTYFTGIKFNMKANTTMSGLRVYFPNEQNKYWTPSSPITTSWATYTVPFTSLQHKTIESAFTFANTENINVHINIDNIHFIASPSSVTTGYANGNETANSGLATTTVASGGSGASGVATSSHTGVSSSSSTASSTASSTASSIASSTASSSASSTSVSSTTAGGKTTSGGSGISTSGITGSGDSMAASTSKTTSNPTGKTTGMTGSSIDHSESHSSDEHHSSSSIIKASLLLVSAALAFASL.

The signal sequence occupies residues methionine 1–serine 19. Asparagine 39 is a glycosylation site (N-linked (GlcNAc...) asparagine). The region spanning serine 41–proline 139 is the Expansin-like EG45 domain. Disulfide bonds link cysteine 44/cysteine 73 and cysteine 76/cysteine 134. N-linked (GlcNAc...) asparagine glycans are attached at residues asparagine 276, asparagine 325, and asparagine 406. Disordered regions lie at residues glycine 421 to alanine 447 and serine 460 to histidine 531. Low complexity-rich tracts occupy residues serine 460–lysine 476 and isoleucine 484–glycine 493. A compositionally biased stretch (polar residues) spans alanine 497–glycine 516. Positions aspartate 520–histidine 531 are enriched in basic and acidic residues.

This sequence belongs to the expansin family. Expansin A subfamily.

Its subcellular location is the secreted. May serve to lubricate the movement of the cellulose microfibrils during cell growth and wall extension and/or may serve to maintain the fluid state of the slug cell wall. Overexpression shows aberrant stalk formation. This Dictyostelium discoideum (Social amoeba) protein is Expansin-like protein 7 (expl7).